The primary structure comprises 431 residues: Enolase (431 aa).

Glutamine 167 contacts (2R)-2-phosphoglycerate. Catalysis depends on glutamate 209, which acts as the Proton donor. Mg(2+) is bound by residues aspartate 246, glutamate 289, and aspartate 316. (2R)-2-phosphoglycerate is bound by residues lysine 341, arginine 370, serine 371, and lysine 392. Lysine 341 (proton acceptor) is an active-site residue.

The protein belongs to the enolase family. In terms of assembly, component of the RNA degradosome, a multiprotein complex involved in RNA processing and mRNA degradation. Requires Mg(2+) as cofactor.

The protein resides in the cytoplasm. Its subcellular location is the secreted. It is found in the cell surface. It carries out the reaction (2R)-2-phosphoglycerate = phosphoenolpyruvate + H2O. It functions in the pathway carbohydrate degradation; glycolysis; pyruvate from D-glyceraldehyde 3-phosphate: step 4/5. In terms of biological role, catalyzes the reversible conversion of 2-phosphoglycerate (2-PG) into phosphoenolpyruvate (PEP). It is essential for the degradation of carbohydrates via glycolysis. This is Enolase from Shewanella sediminis (strain HAW-EB3).